Here is a 710-residue protein sequence, read N- to C-terminus: DNA ligase (710 aa).

The interval 1–26 (MPEDAIGQQVPPEQEAAGAEPTSAAR) is disordered. NAD(+) is bound by residues 53 to 57 (DAEFD), 102 to 103 (SL), and E132. K134 serves as the catalytic N6-AMP-lysine intermediate. NAD(+) is bound by residues R155, E196, K312, and K336. Positions 430, 433, 449, and 455 each coordinate Zn(2+). In terms of domain architecture, BRCT spans 619 to 708 (EGPRPLEGMT…PDAAREVARV (90 aa)).

The protein belongs to the NAD-dependent DNA ligase family. LigA subfamily. The cofactor is Mg(2+). Mn(2+) serves as cofactor.

The enzyme catalyses NAD(+) + (deoxyribonucleotide)n-3'-hydroxyl + 5'-phospho-(deoxyribonucleotide)m = (deoxyribonucleotide)n+m + AMP + beta-nicotinamide D-nucleotide.. Functionally, DNA ligase that catalyzes the formation of phosphodiester linkages between 5'-phosphoryl and 3'-hydroxyl groups in double-stranded DNA using NAD as a coenzyme and as the energy source for the reaction. It is essential for DNA replication and repair of damaged DNA. This Salinispora arenicola (strain CNS-205) protein is DNA ligase.